The chain runs to 525 residues: GMP synthase [glutamine-hydrolyzing] (525 aa).

The Glutamine amidotransferase type-1 domain occupies 9–207 (RILILDFGSQ…VLQICQCEPL (199 aa)). Residue Cys86 is the Nucleophile of the active site. Active-site residues include His181 and Glu183. In terms of domain architecture, GMPS ATP-PPase spans 208 to 400 (WTPRNIIDQT…LGLPNAMLHR (193 aa)). 235–241 (SGGVDSA) is a binding site for ATP.

Homodimer.

It catalyses the reaction XMP + L-glutamine + ATP + H2O = GMP + L-glutamate + AMP + diphosphate + 2 H(+). The protein operates within purine metabolism; GMP biosynthesis; GMP from XMP (L-Gln route): step 1/1. Its function is as follows. Catalyzes the synthesis of GMP from XMP. In Hamiltonella defensa subsp. Acyrthosiphon pisum (strain 5AT), this protein is GMP synthase [glutamine-hydrolyzing].